A 218-amino-acid chain; its full sequence is MAPKFGYWKVKGLVQPTRLLLEHLEETYEERAYDRNEIDAWSNDKFKLGLEFPNLPYYIDGDFKLTQSMAIIRYIADKHNMLGACPKERAEISMLEGAVLDIRMGVLRIAYNKEYETLKVDFLNKLPGRLKMFEDRLSNKTYLNGNCVTHPDFMLYDALDVVLYMDSQCLNEFPKLVSFKKCIEDLPQIKNYLNSSRYIKWPLQGWDATFGGGDTPPK.

The GST N-terminal domain occupies 1–83 (MAPKFGYWKV…YIADKHNMLG (83 aa)). Glutathione-binding positions include 7–8 (YW), 41–45 (WSNDK), 54–55 (NL), and 67–68 (QS). Residues 85 to 203 (CPKERAEISM…NSSRYIKWPL (119 aa)) form the GST C-terminal domain. Tyrosine 111 serves as a coordination point for substrate.

It belongs to the GST superfamily. Mu family. In terms of assembly, homodimer. Tegument and in subtegumentary parenchymal cells. GST 26 may be actively excreted by adult worms.

The enzyme catalyses RX + glutathione = an S-substituted glutathione + a halide anion + H(+). Functionally, conjugation of reduced glutathione to a wide number of exogenous and endogenous hydrophobic electrophiles. Its function is as follows. GST isoenzymes appear to play a central role in the parasite detoxification system. Other functions are also suspected including a role in increasing the solubility of haematin in the parasite gut. This chain is Glutathione S-transferase class-mu 26 kDa isozyme, found in Schistosoma mansoni (Blood fluke).